The primary structure comprises 406 residues: CinA-like protein (406 aa).

Belongs to the CinA family.

In Thermomicrobium roseum (strain ATCC 27502 / DSM 5159 / P-2), this protein is CinA-like protein.